The primary structure comprises 370 residues: Mesoderm posterior protein 2 (370 aa).

3 disordered regions span residues 51 to 89 (PSQPAGPARSTRTTQATAPRRTRPAPAGGQRQSASEREK), 231 to 265 (SLERAADSSPWAPPQACPGMQMSPEPRNKTGHWTQ), and 325 to 350 (TSEDQGSSPALQLPVASPTPSSGLQL). The segment covering 57 to 77 (PARSTRTTQATAPRRTRPAPA) has biased composition (low complexity). The region spanning 79–133 (GQRQSASEREKLRMRTLARALQELRRFLPPSVAPAGQSLTKIETLRLAIRYIGHL) is the bHLH domain. The span at 325-334 (TSEDQGSSPA) shows a compositional bias: polar residues. The segment at 326–330 (SEDQG) is may contain a degradation domain.

Degraded by the proteasome. Post-translationally, phosphorylated.

It localises to the nucleus. Transcription factor with important role in somitogenesis. Defines the rostrocaudal patterning of the somite by participating in distinct Notch pathways. Also regulates the FGF signaling pathway. Specifies the rostral half of the somites. Generates rostro-caudal polarity of somites by down-regulating in the presumptive rostral domain DLL1, a Notch ligand. Participates in the segment border formation by activating in the anterior presomitic mesoderm LFNG, a negative regulator of DLL1-Notch signaling. Acts as a strong suppressor of Notch activity. Together with MESP1 is involved in the epithelialization of somitic mesoderm and in the development of cardiac mesoderm. May play a role with Tcf15 in the differentiation of myotomal and sclerotomal cells by regulating Pax family genes. Also controls the expression of the protocadherin PCDH8/PAPC, EPHA4, RIPPLY2, NOTCH2, FGFR1, and CER1. Binds to the E-boxes within the EPH4A and RIPPLY2 enhancers. The protein is Mesoderm posterior protein 2 (Mesp2) of Mus musculus (Mouse).